The primary structure comprises 134 residues: MKSFNIDHFIASVLQWILNIALIILSIVLSIFLINETITFIQYIFSAKKYTSYKLVESIIVYFLYFEFIALIIKYFKSNYHFPLRYFIYIGITALIRLIIVSHEEPMETLLYAGAILVLVIALYISNMRDLRKE.

4 helical membrane passes run 14–34 (LQWI…IFLI), 56–76 (VESI…IKYF), 82–102 (FPLR…IIVS), and 106–126 (PMET…LYIS).

This sequence belongs to the PsiE family.

Its subcellular location is the cell membrane. The polypeptide is Protein PsiE homolog (Bacillus anthracis).